We begin with the raw amino-acid sequence, 255 residues long: Small ribosomal subunit protein eS1 (255 aa).

Position 2 is an N-acetylalanine; partial (A2).

This sequence belongs to the eukaryotic ribosomal protein eS1 family. Component of the small ribosomal subunit. Mature ribosomes consist of a small (40S) and a large (60S) subunit. The 40S subunit contains about 33 different proteins and 1 molecule of RNA (18S). The 60S subunit contains about 49 different proteins and 3 molecules of RNA (25S, 5.8S and 5S).

It localises to the cytoplasm. This is Small ribosomal subunit protein eS1 from Arthroderma otae (strain ATCC MYA-4605 / CBS 113480) (Microsporum canis).